The sequence spans 635 residues: Protein phosphatase PP2A regulatory subunit A (635 aa).

A compositionally biased stretch (low complexity) spans 1–27 (MSGARSTTAGAVPSAATTSTTSTTSNS). The disordered stretch occupies residues 1-33 (MSGARSTTAGAVPSAATTSTTSTTSNSKDSDSN). HEAT repeat units follow at residues 34 to 72 (ESLYPLALLMDELKHDDIANRVEAMKKLDTIALALGPER), 73 to 111 (TRNELIPFLTEVAQDDEDEVFAVLAEQLGKFVPYIGGPQ), 112 to 150 (YATILLPVLEILASAEETLVREKAVDSLNNVAQELSQEQ), 151 to 189 (LFSDFVPLIEHLATADWFSSKVSACGLFKSVIVRIKDDS), 190 to 228 (LRKNILALYLQLAQDDTPMVKRAVGKNLPILIDLLTQNL), 229 to 273 (GLST…NAKG), 274 to 316 (DESH…SNQA), 317 to 356 (YIDELVQPFLNLCEDNEGDVREAVAKQVSGFAKFLNDPSI), 357 to 395 (ILNKILPAVQNLSMDESETVRSALASKITNIVLLLNKDQ), 396 to 434 (VINNFLPILLNMLRDEFPDVRLNIIASLKVVNDVIGIEL), 435 to 473 (LSDSLLPAITELAKDVNWRVRMAIIEYIPILAEQLGMQF), 474 to 512 (FDQQLSDLCLSWLWDTVYSIREAAVNNLKRLTEIFGSDW), 513 to 553 (CRDE…SLDV), 554 to 598 (VTEQ…YDAL), and 599 to 632 (IKNTILPSLQTLCQDEDVDVKYFAKKSLAECQEL).

It belongs to the phosphatase 2A regulatory subunit A family. PP2A exists in several trimeric forms, all of which consist of a core composed of a catalytic subunit associated with a 65 kDa regulatory subunit (PR65) (subunit A). The core complex associates with a third, variable subunit (subunit B), which confers distinct properties to the holoenzyme.

Phosphatase 2A affects a variety of biological processes in the cell such as transcription, cell cycle progression and cellular morphogenesis, and provides an initial identification of critical substrates for this phosphatase. The regulatory subunit may direct the catalytic subunit to distinct, albeit overlapping, subsets of substrates. This Saccharomyces cerevisiae (strain ATCC 204508 / S288c) (Baker's yeast) protein is Protein phosphatase PP2A regulatory subunit A (TPD3).